The following is a 248-amino-acid chain: Probable transcriptional regulatory protein MCA1220 (248 aa).

It belongs to the TACO1 family.

It localises to the cytoplasm. The polypeptide is Probable transcriptional regulatory protein MCA1220 (Methylococcus capsulatus (strain ATCC 33009 / NCIMB 11132 / Bath)).